Reading from the N-terminus, the 797-residue chain is Calcium-transporting ATPase CtpE (797 aa).

The next 3 membrane-spanning stretches (helical) occupy residues 55 to 75 (LLLI…LLII), 215 to 235 (ILQF…YTQL), and 254 to 274 (VPMV…VGVV). The 4-aspartylphosphate intermediate role is filled by Asp-301. The Mg(2+) site is built by Asp-301, Thr-303, and Asp-536. The next 6 membrane-spanning stretches (helical) occupy residues 601 to 621 (TVYS…AIPL), 633 to 653 (IHVT…LSLA), 667 to 687 (VMTS…VTYL), 703 to 723 (ASTA…AVIA), 729 to 749 (WRLA…SLPL), and 764 to 784 (TSIA…MWWI).

It belongs to the cation transport ATPase (P-type) (TC 3.A.3) family.

Its subcellular location is the cell membrane. It carries out the reaction Ca(2+)(in) + ATP + H2O = Ca(2+)(out) + ADP + phosphate + H(+). Its function is as follows. P-type ATPase involved in specific uptake of calcium. The sequence is that of Calcium-transporting ATPase CtpE (ctpE) from Mycobacterium tuberculosis (strain CDC 1551 / Oshkosh).